A 196-amino-acid chain; its full sequence is Peptidyl-tRNA hydrolase (196 aa).

Tyr14 is a tRNA binding site. The active-site Proton acceptor is the His19. Residues Tyr64, Asn66, and Asn112 each coordinate tRNA.

Belongs to the PTH family. As to quaternary structure, monomer.

Its subcellular location is the cytoplasm. The catalysed reaction is an N-acyl-L-alpha-aminoacyl-tRNA + H2O = an N-acyl-L-amino acid + a tRNA + H(+). Its function is as follows. Hydrolyzes ribosome-free peptidyl-tRNAs (with 1 or more amino acids incorporated), which drop off the ribosome during protein synthesis, or as a result of ribosome stalling. Functionally, catalyzes the release of premature peptidyl moieties from peptidyl-tRNA molecules trapped in stalled 50S ribosomal subunits, and thus maintains levels of free tRNAs and 50S ribosomes. The protein is Peptidyl-tRNA hydrolase of Methylocella silvestris (strain DSM 15510 / CIP 108128 / LMG 27833 / NCIMB 13906 / BL2).